Here is a 292-residue protein sequence, read N- to C-terminus: Glutamyl-Q tRNA(Asp) synthetase (292 aa).

L-glutamate contacts are provided by residues 9-13 and Glu45; that span reads RFAPS. Positions 12 to 22 match the 'HIGH' region motif; that stretch reads PSPSGPLHAGS. The Zn(2+) site is built by Cys99, Cys101, Tyr121, and Cys125. Residues Tyr184 and Arg202 each contribute to the L-glutamate site. The short motif at 240–244 is the 'KMSKS' region element; that stretch reads KLSKQ. Lys243 provides a ligand contact to ATP.

It belongs to the class-I aminoacyl-tRNA synthetase family. GluQ subfamily. Zn(2+) is required as a cofactor.

Catalyzes the tRNA-independent activation of glutamate in presence of ATP and the subsequent transfer of glutamate onto a tRNA(Asp). Glutamate is transferred on the 2-amino-5-(4,5-dihydroxy-2-cyclopenten-1-yl) moiety of the queuosine in the wobble position of the QUC anticodon. The polypeptide is Glutamyl-Q tRNA(Asp) synthetase (Verminephrobacter eiseniae (strain EF01-2)).